Consider the following 375-residue polypeptide: Queuine tRNA-ribosyltransferase (375 aa).

The Proton acceptor role is filled by D93. Substrate is bound by residues 93-97 (DSGGY), D147, Q194, and G221. The tract at residues 252–258 (GVGKPDD) is RNA binding. The Nucleophile role is filled by D271. Residues 276–280 (TRSGR) are RNA binding; important for wobble base 34 recognition. Residues C309, C311, C314, and H340 each coordinate Zn(2+).

Belongs to the queuine tRNA-ribosyltransferase family. Homodimer. Within each dimer, one monomer is responsible for RNA recognition and catalysis, while the other monomer binds to the replacement base PreQ1. Zn(2+) is required as a cofactor.

The catalysed reaction is 7-aminomethyl-7-carbaguanine + guanosine(34) in tRNA = 7-aminomethyl-7-carbaguanosine(34) in tRNA + guanine. It participates in tRNA modification; tRNA-queuosine biosynthesis. Its function is as follows. Catalyzes the base-exchange of a guanine (G) residue with the queuine precursor 7-aminomethyl-7-deazaguanine (PreQ1) at position 34 (anticodon wobble position) in tRNAs with GU(N) anticodons (tRNA-Asp, -Asn, -His and -Tyr). Catalysis occurs through a double-displacement mechanism. The nucleophile active site attacks the C1' of nucleotide 34 to detach the guanine base from the RNA, forming a covalent enzyme-RNA intermediate. The proton acceptor active site deprotonates the incoming PreQ1, allowing a nucleophilic attack on the C1' of the ribose to form the product. After dissociation, two additional enzymatic reactions on the tRNA convert PreQ1 to queuine (Q), resulting in the hypermodified nucleoside queuosine (7-(((4,5-cis-dihydroxy-2-cyclopenten-1-yl)amino)methyl)-7-deazaguanosine). The polypeptide is Queuine tRNA-ribosyltransferase (Sphingopyxis alaskensis (strain DSM 13593 / LMG 18877 / RB2256) (Sphingomonas alaskensis)).